A 333-amino-acid polypeptide reads, in one-letter code: tRNA-dihydrouridine(16) synthase (333 aa).

Residues Pro19–Gln21 and Gln80 contribute to the FMN site. Catalysis depends on Cys110, which acts as the Proton donor. Residues Lys151, Asn211–Asp213, and Gly235–Arg236 each bind FMN.

It belongs to the Dus family. DusC subfamily. The cofactor is FMN.

It catalyses the reaction 5,6-dihydrouridine(16) in tRNA + NADP(+) = uridine(16) in tRNA + NADPH + H(+). The catalysed reaction is 5,6-dihydrouridine(16) in tRNA + NAD(+) = uridine(16) in tRNA + NADH + H(+). In terms of biological role, catalyzes the synthesis of 5,6-dihydrouridine (D), a modified base found in the D-loop of most tRNAs, via the reduction of the C5-C6 double bond in target uridines. Specifically modifies U16 in tRNAs. This chain is tRNA-dihydrouridine(16) synthase, found in Neisseria meningitidis serogroup A / serotype 4A (strain DSM 15465 / Z2491).